A 316-amino-acid polypeptide reads, in one-letter code: WEB family protein At3g13190 (316 aa).

Coiled coils occupy residues 42 to 90 (WNKE…MIND), 119 to 195 (EEES…AEEH), and 233 to 266 (RDET…MAQE). The tract at residues 295–316 (STKEVLKSKPRSSSKEGCLVKC) is disordered.

The protein belongs to the WEB family.

This chain is WEB family protein At3g13190, found in Arabidopsis thaliana (Mouse-ear cress).